A 293-amino-acid chain; its full sequence is Epimerase family protein SDR39U1 (293 aa).

Residues 31–32 (SR), 58–59 (LA), E77, R82, and V160 each bind NADP(+).

This sequence belongs to the NAD(P)-dependent epimerase/dehydratase family. SDR39U1 subfamily. As to expression, expressed in adrenal gland.

Putative NADP-dependent oxidoreductase. In Homo sapiens (Human), this protein is Epimerase family protein SDR39U1 (SDR39U1).